Here is a 469-residue protein sequence, read N- to C-terminus: Argininosuccinate lyase (469 aa).

The protein belongs to the lyase 1 family. Argininosuccinate lyase subfamily.

The protein localises to the cytoplasm. The catalysed reaction is 2-(N(omega)-L-arginino)succinate = fumarate + L-arginine. It participates in amino-acid biosynthesis; L-arginine biosynthesis; L-arginine from L-ornithine and carbamoyl phosphate: step 3/3. The polypeptide is Argininosuccinate lyase (Novosphingobium aromaticivorans (strain ATCC 700278 / DSM 12444 / CCUG 56034 / CIP 105152 / NBRC 16084 / F199)).